A 726-amino-acid chain; its full sequence is Probable pre-mRNA-splicing factor ATP-dependent RNA helicase DEAH2 (726 aa).

Positions Leu71–Pro240 constitute a Helicase ATP-binding domain. Gly84–Thr91 lines the ATP pocket. Positions Asp187–His190 match the DEAH box motif. The region spanning Thr265–Gly445 is the Helicase C-terminal domain.

This sequence belongs to the DEAD box helicase family. DEAH subfamily. PRP43 sub-subfamily.

The catalysed reaction is ATP + H2O = ADP + phosphate + H(+). Functionally, may be involved in pre-mRNA splicing. This chain is Probable pre-mRNA-splicing factor ATP-dependent RNA helicase DEAH2, found in Arabidopsis thaliana (Mouse-ear cress).